Here is a 251-residue protein sequence, read N- to C-terminus: 1-(5-phosphoribosyl)-5-[(5-phosphoribosylamino)methylideneamino] imidazole-4-carboxamide isomerase (251 aa).

The active-site Proton acceptor is the Asp8. Asp131 acts as the Proton donor in catalysis.

The protein belongs to the HisA/HisF family.

Its subcellular location is the cytoplasm. The catalysed reaction is 1-(5-phospho-beta-D-ribosyl)-5-[(5-phospho-beta-D-ribosylamino)methylideneamino]imidazole-4-carboxamide = 5-[(5-phospho-1-deoxy-D-ribulos-1-ylimino)methylamino]-1-(5-phospho-beta-D-ribosyl)imidazole-4-carboxamide. The protein operates within amino-acid biosynthesis; L-histidine biosynthesis; L-histidine from 5-phospho-alpha-D-ribose 1-diphosphate: step 4/9. This is 1-(5-phosphoribosyl)-5-[(5-phosphoribosylamino)methylideneamino] imidazole-4-carboxamide isomerase from Burkholderia thailandensis (strain ATCC 700388 / DSM 13276 / CCUG 48851 / CIP 106301 / E264).